The primary structure comprises 430 residues: Phosphomethylpyrimidine synthase (430 aa).

Residues N67, M96, Y125, H161, 183–185 (SRG), 224–227 (DALR), and E263 each bind substrate. H267 serves as a coordination point for Zn(2+). Y290 is a binding site for substrate. H331 serves as a coordination point for Zn(2+). [4Fe-4S] cluster is bound by residues C406, C409, and C413.

This sequence belongs to the ThiC family. Homodimer. [4Fe-4S] cluster serves as cofactor.

It carries out the reaction 5-amino-1-(5-phospho-beta-D-ribosyl)imidazole + S-adenosyl-L-methionine = 4-amino-2-methyl-5-(phosphooxymethyl)pyrimidine + CO + 5'-deoxyadenosine + formate + L-methionine + 3 H(+). It functions in the pathway cofactor biosynthesis; thiamine diphosphate biosynthesis. Functionally, catalyzes the synthesis of the hydroxymethylpyrimidine phosphate (HMP-P) moiety of thiamine from aminoimidazole ribotide (AIR) in a radical S-adenosyl-L-methionine (SAM)-dependent reaction. This is Phosphomethylpyrimidine synthase from Campylobacter jejuni subsp. doylei (strain ATCC BAA-1458 / RM4099 / 269.97).